Here is a 665-residue protein sequence, read N- to C-terminus: DNA ligase (665 aa).

NAD(+) contacts are provided by residues aspartate 31–aspartate 35, serine 80–leucine 81, and glutamate 111. Lysine 113 acts as the N6-AMP-lysine intermediate in catalysis. Positions 134, 171, 287, and 311 each coordinate NAD(+). Cysteine 405, cysteine 408, cysteine 423, and cysteine 429 together coordinate Zn(2+). One can recognise a BRCT domain in the interval phenylalanine 588–histidine 665.

It belongs to the NAD-dependent DNA ligase family. LigA subfamily. Requires Mg(2+) as cofactor. Mn(2+) is required as a cofactor.

The enzyme catalyses NAD(+) + (deoxyribonucleotide)n-3'-hydroxyl + 5'-phospho-(deoxyribonucleotide)m = (deoxyribonucleotide)n+m + AMP + beta-nicotinamide D-nucleotide.. In terms of biological role, DNA ligase that catalyzes the formation of phosphodiester linkages between 5'-phosphoryl and 3'-hydroxyl groups in double-stranded DNA using NAD as a coenzyme and as the energy source for the reaction. It is essential for DNA replication and repair of damaged DNA. This Protochlamydia amoebophila (strain UWE25) protein is DNA ligase.